The following is a 478-amino-acid chain: Cytochrome P450 family 716 subfamily AD polypeptide 4 (478 aa).

A helical membrane pass occupies residues 1-21 (MELFLPSVLLILTVFCFYYLF). Heme is bound at residue C425.

Belongs to the cytochrome P450 family. The cofactor is heme. Mainly expressed in petioles and, to a lower extent, in roots.

It localises to the membrane. It catalyses the reaction (1S,3bR,4R,5aR,9aR,9bR,11aS)-1-[(4R)-5-[(2S)-3,3-dimethyloxiran-2-yl]-1,4-dihydroxybutan-2-yl]-3b,6,6,9a,11a-pentamethyl-7-oxo-1H,2H,3bH,4H,5H,5aH,6H,7H,9aH,9bH,10H,11H,11aH-cyclopenta[a]phenanthren-4-yl acetate + reduced [NADPH--hemoprotein reductase] + O2 = (1S,3bR,4R,5aR,9aR,9bR,11aS)-1-(1-hydroxy-4-oxobutan-2-yl)-3b,6,6,9a,11a-pentamethyl-7-oxo-1H,2H,3bH,4H,5H,5aH,6H,7H,9aH,9bH,10H,11H,11aH-cyclopenta[a]phenanthren-4-yl acetate + 2-methylpropanoate + oxidized [NADPH--hemoprotein reductase] + H2O + 2 H(+). The protein operates within secondary metabolite biosynthesis; terpenoid biosynthesis. Its function is as follows. Monooxygenase involved in the biosynthesis of limonoids triterpene natural products such as azadirachtin, an antifeedant widely used as bioinsecticide, and possessing many medicinal applications including anti-tumoral, anti-malarial, anti-rheumatic, antibacterial, anti-inflammatory, anti-pyretic and diuretic effects. Catalyzes the formation of (1S,3bR,4R,5aR,9aR,9bR,11aS)-1-(1-hydroxy-4-oxobutan-2-yl)-3b,6,6,9a,11a-pentamethyl-7-oxo-1H,2H,3bH,4H,5H,5aH,6H,7H,9aH,9bH,10H,11H,11aH-cyclopenta[a]phenanthren-4-yl acetate. The polypeptide is Cytochrome P450 family 716 subfamily AD polypeptide 4 (Melia azedarach (Chinaberry tree)).